Here is a 1179-residue protein sequence, read N- to C-terminus: MIKIITGRQSDPLQTEIIGRAARNYLAQPGKDTFIIVPNHIKFNTEVSAIGKVAQLQGREETSVKNLHVLSFSRLAWFFFKKADLLMPESLDDAAATMILEQIIDKRRDELLLFKNSHANSGMIKQVYSTILQVHTGQLDLGNLLERAADPAVALDLDNETRDKLHDLDLIYQDFLEIVSEKHFATKDELNIQLNQLLASRPDLVSQASFYVTDFSHFSIQEKMTMQLLAAFASEMTFAFKTADGSVIEPAAGEYDYVVQKTIKDLTGYFSAHDFAWEREKIASPASPARDLNQAWQGQGQPDLNNLQLVKADSRYAEAYFVARTIYDEVALKGCQYRDFLVLAPNLQEYETYLAPILRQNQIPFFDDLQQQMKYHPLVLLLENLGKLLQQAGDTPALLSIMKTRLLIPDWYLEGDAEAGEAAYLRDIDQLENFALAHGIKYSLWQKPLKDFTKAQVIALDQEQYQKWLDRLDKLRDFFVSKISRLARQLKSEKDSMTAVKLFFDFLVKNGVSARLEAWRLKASESGDLQQAQQPEQCWNLLLSLLKDYLLVNPENFAWADFFKMLTAAFSQANFATIPASLDAVTLSEYGMVQTSGYKQVFIIGAANGSLPQINDQPNFLTTENLASLADFFDQDAYLEDSQQLRNLDQEYQFGNALALASDRVYISYPVINSNNDLLDPSIYYKRLLKLVNGREYRQRDLPDIAEKDRTEFARQLLLFLTSPRASLGYLAYAEENSAQSPLVAKLVELSRQYEEEKAEEIAEGMAYDNNPQDISEDLAERLYGKDLLSSVSQLESYYQNSFEYFLNYGLRLRPRAENELNAIQSGNYFHRTFELLLKEMQKKNIEIDKLSELDLELLLKQVRSEILQEPLYQQFLRDPFNEYLFKVFDKTTSKVAQSYRRKQQENKMRATYGELAFGPAEKLAGLVLPLKKFAGQRKISLRGKIDRVDLFNGDQHVLGQLIDYKSSDHSFNLARFASGVDLQMIAYLDVLEKNRDLLAGGRQFDLLGAFYQYVTRKLNSVNSSSTGALFDSKLQLKENLLGGEDKLKLSGVFVSEPAWYQEVDKALEKKATSSVYRGLKLNKSGGFGKKDNFFSQDEMRELLEYVEALIEDAASEILSGQIALNPFRQGNNTGLAFSDYKDIFYFDQQLPTNSYRDLPNLKKADLLALVEKRLRQRE.

The protein belongs to the helicase family. AddB/RexB type 2 subfamily. In terms of assembly, heterodimer of AddA and RexB. Mg(2+) serves as cofactor.

In terms of biological role, the heterodimer acts as both an ATP-dependent DNA helicase and an ATP-dependent, dual-direction single-stranded exonuclease. Recognizes the chi site generating a DNA molecule suitable for the initiation of homologous recombination. This subunit has 5' -&gt; 3' nuclease activity but not helicase activity. The chain is ATP-dependent helicase/deoxyribonuclease subunit B from Lactobacillus delbrueckii subsp. bulgaricus (strain ATCC BAA-365 / Lb-18).